The primary structure comprises 2234 residues: MPLFLSALLVLLLVALSALFLGRWLVVRLATRWCQRKLQAELKIGSFRFFWIQNVSLKFQQHQQTVEIDNLWISSKLLSHDLPNYVALCFGEVRIRTDLQKVSSLSAPFSQNTEVEQKELSLSPSLLKIFCQLFSIHVDAINIMVLKVATSESLWHIQISRSRFLLDSDGKSLICKVNLSKINSKVLKSGQLEDTCLVELSLALDLRLQVSVSSWHLTAVTVDVWTLHAELHEGLFHSQLLCHAPGRISKSVSCSDLTENFAEPTLPGLYLLQRLPDQVKVKMENTSVVLSMNSQKRHLTWTLKLLHFLYHRDEDQLPLRSFTANYDMAQMSTELLLEDGLLLSQSRQRIVCLNSLKANVQVTTIDLSASLVLNTCIIHYRHQEFSHWLLMLALETQGASSPDLKQRKKRTFPQILAPIIFSTSVSNVSISIQLGDTPPFALGFNSISLDYQHLRPQSIHQRAVLTVDHLCWRVGSDSHIQRAPHPPNMHVWGEALVLDSFTLQGSYNQPLGLSSTQSNTLFLDCTIRGLQVEISDICAQCLSRVLSLVIPQSERSAVSRKSSLGESVTLLWKVDLKVEDMNLFTLSALVGASELRLDTLTVLGSAETSTVGIQGLVLALVKSVTEKMQPCCKAPDIPTPVLGLSMLSLTYHSSIRSLEVQCGAGLTLLWSPPDHMYLYQHVRATLQCRDLLRATVFPEIIESHSLNTPQSTWEPEDHLPESSLPRRLLTLTLEVSTAKLTAFVAEDKFITLAAESVSLNRHGGSLQAYCPELAAGFDGNSIFNLKEVEVQLLPELEEMILHRNPFPALQTLRNRVWLLSLGSVSVEFPYQYDFSRTLDEAVGVQKWLKGLHRGTHAWASPSPAPLPPDLLLKVQHFSWVFLDDIFEVKLHDNYELMKDESKESAKRLQLLDAKVAALRKQHGELLPARKIEELYASLERKNIEIYIQRSRRLYGNTPMRRALLTWSLAGLELVALADASFHGPEHVIEQVRELDPGSPFPAEGMDLVTQWCRMLKCNVKTFLVRIRDYPRYLFEIRDWRLMGRLAGTEQSGQPCSRRRQILHLGLPWGNVAVERNMPPLKFYHDFHSEIFQYTVVWGPCWDPAWTLIGQCVDLLTKPSADPSPPLPWWDKSRLLFHGDWHMDIEQANLHQLATEDPYNTTENMHWEWSHLSFHWKPGQFVFRGDLDVNVRTASKYDDCCFLHLPDLCMTLDLQWLCHGNPHDHHSVTLRAPEFLPEVPLGQLHDSYRAFRSENLNLSIKMDLTRHSGTISQPRILVYSSTLRWMQNFWATWTSITRPICRGKLFNNLKPSKKKLGQHYKQLSYTALFPQLQVHYWASFAQQRGIQIECSQGHVFTRGTQRLIPQAGTVMRRLISEWSVTQMVSDLSQVTVHLMASPTEENADHCLDPLITKTHLLSLSSLTYQRHSNRTTEEELSARDGDPAFHTHQLYLVDLRISWTTTNRDIAFGLYDGYKKAAVLKRNLSTEALKGLKIDPQMSAKKPKRGIPPSAQVPPHVSTPSFSGRPDKGSSGGAYMLQKLIEETDRFVVFTEEESGMSDQLCGIAACQTDDIYNRNCLIELVNCQMVLRGAETEGCVIVSAAKAQLLQCQHHPAWYGDTLKQKTSWTCLLDGMQYFATTESSPTEQDGRQLWLEVKNIEEHRERSLDSVQELMESGQAVGGMVTTTTDWNQPAEAQQAQQVQRIISRCNCRMYYISYSHDIDPELATQIKPPEVHENQEKEDLLKKQEGAVDTFTLIHHELEISTNPAQYAMILDIVNNLLLHVEPKRKEHSEKKQRVRFQLEISSNPEEQRSSILHLQEAVRQHVAQIRHLEKQMYSIMKSLQDDSKNENLLDLNQKLQLQLNQEKANLQLESEELNILIRCFKDFQLQRANKMELRKQQEDVSVVRRTEFYFAQARWRLTEEDGQLGIAELELQRFLYSKVNKSDDTAEHLLELGWFTMNNLLPNAIYKVVLRPQSSCQSGRQLALRLFSKVRPPVGGISVKEHFEVNVVPLTIQLSHRFFHRMMGFFFPGRNVEDDEVGDEEDKSKLVTTGIPVVKPRQLIATDDAVPLGSGKGVAQGLTRSSGVRRSFRKLPEHPVDDIDKMKERAAMNNSFIYIKIPQVPLCVSYKGEKNSVDWGDLNLVLPCLEYHNNTWTWLDFAMAVKRDSRKALVAQVIKEKLRLKPATGSEVRGKLETKCDLNMQQQEEEKARLLIGLSVGDKNPGKKSIFGRRK.

Residues 1-31 (MPLFLSALLVLLLVALSALFLGRWLVVRLAT) form the signal peptide. Residues 29–108 (LATRWCQRKL…LQKVSSLSAP (80 aa)) are transmembrane domain. Phosphoserine is present on S563. The segment at 1496–1529 (QMSAKKPKRGIPPSAQVPPHVSTPSFSGRPDKGS) is disordered. Positions 1814-1885 (ILHLQEAVRQ…LNILIRCFKD (72 aa)) form a coiled coil. A phosphoserine mark is found at S1846 and S2090.

The protein belongs to the SABRE family.

It localises to the cell membrane. The protein resides in the endoplasmic reticulum membrane. Its subcellular location is the mitochondrion membrane. Functionally, tube-forming lipid transport protein which binds to phosphatidylinositols and affects phosphatidylinositol-4,5-bisphosphate (PtdIns-4,5-P2) distribution. The polypeptide is Bridge-like lipid transfer protein family member 2 (Bltp2) (Mus musculus (Mouse)).